A 285-amino-acid polypeptide reads, in one-letter code: Type II restriction enzyme Cfr10I (285 aa).

The Mg(2+) site is built by Asp-134 and Glu-204.

In terms of assembly, homodimer. Mg(2+) is required as a cofactor.

It carries out the reaction Endonucleolytic cleavage of DNA to give specific double-stranded fragments with terminal 5'-phosphates.. An F and P subtype restriction enzyme that recognizes the double-stranded sequence 5'-RCCGGY-3' and cleaves after R-1. The protein is Type II restriction enzyme Cfr10I (cfr10IR) of Citrobacter freundii.